The primary structure comprises 540 residues: MRVNNGLTPQELEAYGISDVHDIVYNPSYDLLYQEELDPSLTGYERGVLTNLGAVAVDTGIFTGRSPKDKYIVRDDTTRDTFWWADKGKGKNDNKPLSPETWQHLKGLVTKQLSGKRLFVVDAFCGANPDTRLSVRFITEVAWQAHFVKNMFIRPSDEELAGFKPDFIVMNGAKCTNPQWKEQGLNSENFVAFNLTERMQLIGGTWYGGEMKKGMFSMMNYLLPLKGIASMHCSANVGEKGDVAVFFGLSGTGKTTLSTDPKRRLIGDDEHGWDDDGVFNFEGGCYAKTIKLSKEAEPEIYNAIRRDALLENVTVREDGSIDFDDGSKTENTRVSYPIYHIENIVKPVSKAGHATKVIFLTADAFGVLPPVSRLTADQTQYHFLSGFTAKLAGTERGITEPTPTFSACFGAAFLSLHPTQYAEVLVKRMQAAGAQAYLVNTGWNGTGKRISIKDTRAIIDAILNGSLDNAETFTLPMFNLAIPTELPGVDTKILDPRNTYASPEQWQEKAETLAKLFIDNFDKYTDTPAGAALVAAGPKL.

R65 is a substrate binding site. K87 is modified (N6-acetyllysine). Substrate is bound by residues Y207 and K213. Residues K213, H232, and G248–T256 contribute to the ATP site. Residues K213 and H232 each contribute to the Mn(2+) site. A Mn(2+)-binding site is contributed by D269. ATP contacts are provided by residues E297, R333, R449–I450, and T455. Residue R333 coordinates substrate. An N6-acetyllysine modification is found at K523.

The protein belongs to the phosphoenolpyruvate carboxykinase (ATP) family. In terms of assembly, monomer. It depends on Mn(2+) as a cofactor.

The protein resides in the cytoplasm. It catalyses the reaction oxaloacetate + ATP = phosphoenolpyruvate + ADP + CO2. It functions in the pathway carbohydrate biosynthesis; gluconeogenesis. In terms of biological role, involved in the gluconeogenesis. Catalyzes the conversion of oxaloacetate (OAA) to phosphoenolpyruvate (PEP) through direct phosphoryl transfer between the nucleoside triphosphate and OAA. The polypeptide is Phosphoenolpyruvate carboxykinase (ATP) (Escherichia coli O7:K1 (strain IAI39 / ExPEC)).